The sequence spans 481 residues: Tryptophan--tRNA ligase, cytoplasmic (481 aa).

In terms of domain architecture, WHEP-TRS spans 12–68; the sequence is SPLELFNSIAAQGELVRSLKAGNAPKDEIESAVKMLLSLKMNYKTAMGEEYKAGCPP. The interval 65-85 is disordered; it reads GCPPGNSTAGSNGDPDATKAS. K158 is subject to N6-succinyllysine. The short motif at 168–177 is the 'HIGH' region element; the sequence is PSSEAMHLGH. The short motif at 353–357 is the 'KMSKS' region element; sequence KMSAS. A Phosphoserine modification is found at S355.

This sequence belongs to the class-I aminoacyl-tRNA synthetase family. As to quaternary structure, homodimer. Interacts with oxidized form of GAPDH. Proteolytic cleavage generates 2 forms; T1-TrpRS and T2-TrpRS.

It localises to the cytoplasm. It catalyses the reaction tRNA(Trp) + L-tryptophan + ATP = L-tryptophyl-tRNA(Trp) + AMP + diphosphate + H(+). Functionally, catalyzes the attachment of tryptophan to tRNA(Trp) in a two-step reaction: tryptophan is first activated by ATP to form Trp-AMP and then transferred to the acceptor end of the tRNA(Trp). Could also possess an angiostatic activity. This chain is Tryptophan--tRNA ligase, cytoplasmic, found in Rattus norvegicus (Rat).